A 253-amino-acid chain; its full sequence is Ubiquinone/menaquinone biosynthesis C-methyltransferase UbiE (253 aa).

S-adenosyl-L-methionine-binding positions include threonine 76, aspartate 97, 125–126, and serine 142; that span reads NA.

The protein belongs to the class I-like SAM-binding methyltransferase superfamily. MenG/UbiE family.

It catalyses the reaction a 2-demethylmenaquinol + S-adenosyl-L-methionine = a menaquinol + S-adenosyl-L-homocysteine + H(+). It carries out the reaction a 2-methoxy-6-(all-trans-polyprenyl)benzene-1,4-diol + S-adenosyl-L-methionine = a 5-methoxy-2-methyl-3-(all-trans-polyprenyl)benzene-1,4-diol + S-adenosyl-L-homocysteine + H(+). Its pathway is quinol/quinone metabolism; menaquinone biosynthesis; menaquinol from 1,4-dihydroxy-2-naphthoate: step 2/2. It functions in the pathway cofactor biosynthesis; ubiquinone biosynthesis. Methyltransferase required for the conversion of demethylmenaquinol (DMKH2) to menaquinol (MKH2) and the conversion of 2-polyprenyl-6-methoxy-1,4-benzoquinol (DDMQH2) to 2-polyprenyl-3-methyl-6-methoxy-1,4-benzoquinol (DMQH2). The polypeptide is Ubiquinone/menaquinone biosynthesis C-methyltransferase UbiE (Xylella fastidiosa (strain M23)).